Consider the following 638-residue polypeptide: Chaperone protein DnaK (638 aa).

Phosphothreonine; by autocatalysis is present on threonine 198. Positions 599–638 (IYESQQAEGGAEGGPSGHHDDGIVDADYEEVKDDNTKKSA) are disordered. A compositionally biased stretch (acidic residues) spans 621–630 (IVDADYEEVK).

Belongs to the heat shock protein 70 family.

Acts as a chaperone. The sequence is that of Chaperone protein DnaK from Allorhizobium ampelinum (strain ATCC BAA-846 / DSM 112012 / S4) (Agrobacterium vitis (strain S4)).